Reading from the N-terminus, the 354-residue chain is DNA integrity scanning protein DisA (354 aa).

A DAC domain is found at 6–144 (EKELKSILKL…GHIKYVLRDS (139 aa)). ATP contacts are provided by residues glycine 73, leucine 91, and 104–108 (TRHRT).

It belongs to the DisA family. As to quaternary structure, homooctamer. Requires Mg(2+) as cofactor.

It catalyses the reaction 2 ATP = 3',3'-c-di-AMP + 2 diphosphate. Functionally, participates in a DNA-damage check-point that is active prior to asymmetric division when DNA is damaged. DisA forms globular foci that rapidly scan along the chromosomes during sporulation, searching for lesions. When a lesion is present, DisA pauses at the lesion site. This triggers a cellular response that culminates in a temporary block in sporulation initiation. Its function is as follows. Also has diadenylate cyclase activity, catalyzing the condensation of 2 ATP molecules into cyclic di-AMP (c-di-AMP). c-di-AMP acts as a signaling molecule that couples DNA integrity with progression of sporulation. The rise in c-di-AMP level generated by DisA while scanning the chromosome, operates as a positive signal that advances sporulation; upon encountering a lesion, the DisA focus arrests at the damaged site and halts c-di-AMP synthesis. The polypeptide is DNA integrity scanning protein DisA (Clostridium kluyveri (strain ATCC 8527 / DSM 555 / NBRC 12016 / NCIMB 10680 / K1)).